Reading from the N-terminus, the 886-residue chain is Adhesion G protein-coupled receptor E1 (886 aa).

The first 20 residues, Met1–Gly20, serve as a signal peptide directing secretion. At His21–Asp599 the chain is on the extracellular side. Positions Lys31 to Lys79 constitute an EGF-like 1 domain. 18 cysteine pairs are disulfide-bonded: Cys35/Cys47, Cys41/Cys56, Cys58/Cys78, Cys84/Cys97, Cys91/Cys106, Cys108/Cys130, Cys136/Cys148, Cys142/Cys157, Cys159/Cys170, Cys176/Cys188, Cys182/Cys197, Cys199/Cys219, Cys225/Cys235, Cys229/Cys244, Cys246/Cys266, Cys272/Cys285, Cys279/Cys294, and Cys296/Cys315. The EGF-like 2; calcium-binding domain maps to Asp80–Thr131. N-linked (GlcNAc...) asparagine glycans are attached at residues Asn94, Asn99, and Asn127. One can recognise an EGF-like 3; calcium-binding domain in the interval Asp132 to Glu171. The N-linked (GlcNAc...) asparagine glycan is linked to Asn167. In terms of domain architecture, EGF-like 4; calcium-binding spans Asp172–Glu220. N-linked (GlcNAc...) asparagine glycans are attached at residues Asn189 and Asn194. In terms of domain architecture, EGF-like 5; calcium-binding spans Asp221–Arg267. Residues Asn232 and Asn258 are each glycosylated (N-linked (GlcNAc...) asparagine). Residues Asp268 to Gln316 enclose the EGF-like 6; calcium-binding domain. 4 N-linked (GlcNAc...) asparagine glycosylation sites follow: Asn312, Asn366, Asn375, and Asn448. Residues Glu431–Thr597 form the GAIN-B domain. Cystine bridges form between Cys550/Cys579 and Cys567/Cys581. Residues Cys550–Thr597 form a GPS region. The helical transmembrane segment at Phe600–Cys627 threads the bilayer. The Cytoplasmic segment spans residues Arg628–Asn634. The helical transmembrane segment at Thr635–Ile656 threads the bilayer. Residues His657–Ala666 lie on the Extracellular side of the membrane. Residues Ile667 to Leu690 traverse the membrane as a helical segment. Residues Phe691–Lys709 are Cytoplasmic-facing. The chain crosses the membrane as a helical span at residues Met710–Val731. Residues Gln732 to Glu747 are Extracellular-facing. Residues Thr748–Leu776 traverse the membrane as a helical segment. Topologically, residues Arg777–Arg794 are cytoplasmic. The helical transmembrane segment at Leu795–Gly814 threads the bilayer. Residues Ile815–Phe829 are Extracellular-facing. The helical transmembrane segment at Thr830–Arg852 threads the bilayer. The Cytoplasmic portion of the chain corresponds to Glu853–Gly886. The tract at residues Lys862 to Gly886 is disordered. Residues Thr863–Gly886 show a composition bias toward polar residues.

It belongs to the G-protein coupled receptor 2 family. Adhesion G-protein coupled receptor (ADGR) subfamily. As to expression, expression is restricted to eosinophils.

The protein resides in the cell membrane. In terms of biological role, orphan receptor involved in cell adhesion and probably in cell-cell interactions specifically involving cells of the immune system. May play a role in regulatory T-cells (Treg) development. The polypeptide is Adhesion G protein-coupled receptor E1 (Homo sapiens (Human)).